A 262-amino-acid polypeptide reads, in one-letter code: Outer membrane protein assembly factor BamD (262 aa).

An N-terminal signal peptide occupies residues 1-18; the sequence is MRKIKSLALLAVAALVIG. The N-palmitoyl cysteine moiety is linked to residue cysteine 19. Residue cysteine 19 is the site of S-diacylglycerol cysteine attachment.

Belongs to the BamD family. As to quaternary structure, part of the Bam complex.

The protein resides in the cell outer membrane. Functionally, part of the outer membrane protein assembly complex, which is involved in assembly and insertion of beta-barrel proteins into the outer membrane. The protein is Outer membrane protein assembly factor BamD of Haemophilus influenzae (strain ATCC 51907 / DSM 11121 / KW20 / Rd).